The chain runs to 119 residues: MPRVKRGVTARARHKKIINLAKGYRGRRNNVYRIAKQAVMRAGQYAYRDRRNKKRVFRALWITRINAAVRQHDMTYSVFINGLKKASIELDRKVLADMAVFDKAAFAAIVKQVKAAVAA.

The protein belongs to the bacterial ribosomal protein bL20 family.

Functionally, binds directly to 23S ribosomal RNA and is necessary for the in vitro assembly process of the 50S ribosomal subunit. It is not involved in the protein synthesizing functions of that subunit. This chain is Large ribosomal subunit protein bL20, found in Burkholderia cenocepacia (strain HI2424).